The following is a 302-amino-acid chain: Polyamine aminopropyltransferase (302 aa).

The PABS domain maps to Trp-4–Asp-239. Gln-33 serves as a coordination point for S-methyl-5'-thioadenosine. Spermidine contacts are provided by His-64 and Glu-88. S-methyl-5'-thioadenosine is bound by residues Asp-108 and Asp-140–Gly-141. Asp-158 functions as the Proton acceptor in the catalytic mechanism. S-methyl-5'-thioadenosine is bound at residue Pro-167.

Belongs to the spermidine/spermine synthase family. In terms of assembly, homodimer or homotetramer.

It is found in the cytoplasm. The catalysed reaction is S-adenosyl 3-(methylsulfanyl)propylamine + putrescine = S-methyl-5'-thioadenosine + spermidine + H(+). Its pathway is amine and polyamine biosynthesis; spermidine biosynthesis; spermidine from putrescine: step 1/1. In terms of biological role, catalyzes the irreversible transfer of a propylamine group from the amino donor S-adenosylmethioninamine (decarboxy-AdoMet) to putrescine (1,4-diaminobutane) to yield spermidine. This Sulfolobus acidocaldarius (strain ATCC 33909 / DSM 639 / JCM 8929 / NBRC 15157 / NCIMB 11770) protein is Polyamine aminopropyltransferase.